The primary structure comprises 284 residues: Pantothenate synthetase (284 aa).

An ATP-binding site is contributed by 30-37 (MGYLHEGH). H37 acts as the Proton donor in catalysis. (R)-pantoate is bound at residue Q61. Q61 provides a ligand contact to beta-alanine. 147-150 (GQKD) is an ATP binding site. A (R)-pantoate-binding site is contributed by Q153. ATP is bound by residues V176 and 184–187 (KSSR).

It belongs to the pantothenate synthetase family. Homodimer.

It is found in the cytoplasm. It carries out the reaction (R)-pantoate + beta-alanine + ATP = (R)-pantothenate + AMP + diphosphate + H(+). It functions in the pathway cofactor biosynthesis; (R)-pantothenate biosynthesis; (R)-pantothenate from (R)-pantoate and beta-alanine: step 1/1. Its function is as follows. Catalyzes the condensation of pantoate with beta-alanine in an ATP-dependent reaction via a pantoyl-adenylate intermediate. The chain is Pantothenate synthetase from Lysinibacillus sphaericus (strain C3-41).